The chain runs to 381 residues: 1-deoxy-D-xylulose 5-phosphate reductoisomerase (381 aa).

NADPH contacts are provided by Thr-10, Gly-11, Ser-12, Ile-13, Asn-38, and Asn-121. Lys-122 contributes to the 1-deoxy-D-xylulose 5-phosphate binding site. Residue Glu-123 participates in NADPH binding. Asp-147 provides a ligand contact to Mn(2+). The 1-deoxy-D-xylulose 5-phosphate site is built by Ser-148, Glu-149, Ser-173, and His-196. Glu-149 is a binding site for Mn(2+). Gly-202 lines the NADPH pocket. 1-deoxy-D-xylulose 5-phosphate-binding residues include Ser-209, Asn-214, Lys-215, and Glu-218. A Mn(2+)-binding site is contributed by Glu-218.

The protein belongs to the DXR family. Requires Mg(2+) as cofactor. The cofactor is Mn(2+).

It catalyses the reaction 2-C-methyl-D-erythritol 4-phosphate + NADP(+) = 1-deoxy-D-xylulose 5-phosphate + NADPH + H(+). It functions in the pathway isoprenoid biosynthesis; isopentenyl diphosphate biosynthesis via DXP pathway; isopentenyl diphosphate from 1-deoxy-D-xylulose 5-phosphate: step 1/6. Its function is as follows. Catalyzes the NADPH-dependent rearrangement and reduction of 1-deoxy-D-xylulose-5-phosphate (DXP) to 2-C-methyl-D-erythritol 4-phosphate (MEP). This chain is 1-deoxy-D-xylulose 5-phosphate reductoisomerase, found in Alkaliphilus oremlandii (strain OhILAs) (Clostridium oremlandii (strain OhILAs)).